Reading from the N-terminus, the 111-residue chain is Probable 4-amino-4-deoxy-L-arabinose-phosphoundecaprenol flippase subunit ArnE (111 aa).

The Cytoplasmic portion of the chain corresponds to 1 to 37 (MIWLVLILASLLSVTGQLCQKQATRPVAINKRRKHIA). Residues 38 to 58 (LWLGLGLVCLGLAMVLWLLVL) form a helical membrane-spanning segment. Positions 40–109 (LGLGLVCLGL…IIGGIVILGS (70 aa)) constitute an EamA domain. The Periplasmic portion of the chain corresponds to 59-60 (QT). A helical transmembrane segment spans residues 61–81 (VPVGIAYPMLSLNFVWVTLAA). Residues 82–87 (TKLWHE) are Cytoplasmic-facing. A helical transmembrane segment spans residues 88–108 (PVSFRHWCGVAFIIGGIVILG). Residues 109–111 (STV) lie on the Periplasmic side of the membrane.

Belongs to the ArnE family. Heterodimer of ArnE and ArnF.

It is found in the cell inner membrane. The protein operates within bacterial outer membrane biogenesis; lipopolysaccharide biosynthesis. Translocates 4-amino-4-deoxy-L-arabinose-phosphoundecaprenol (alpha-L-Ara4N-phosphoundecaprenol) from the cytoplasmic to the periplasmic side of the inner membrane. The protein is Probable 4-amino-4-deoxy-L-arabinose-phosphoundecaprenol flippase subunit ArnE of Escherichia fergusonii (strain ATCC 35469 / DSM 13698 / CCUG 18766 / IAM 14443 / JCM 21226 / LMG 7866 / NBRC 102419 / NCTC 12128 / CDC 0568-73).